Reading from the N-terminus, the 437-residue chain is MLLFWWWELGDPCAWTGKGRGTLKMSPATTGTFLLTVYTLFSKVHSDRNVYPSAGVLFVHVLEREYFKGEFPPYPKPGEVSNDPITFNTNLMGYPDRPGWLRYIQRTPYSDGVLYGSPTAENVGKPTIIEITAYNRRTFETARHNLIINIMSAEEFPLPYQAEFFIKNMNVEEMLASEVLGDFLGAVKNVWQPERLNAINITSALDRGGRVPLPINDMKEGVYVMVGADVAFSSCLREVENPQNQLRCSQEMEPVITCDKKFRTHFHIDWCKISLVDKTKQVSTYQEVVRGEGILPDGGEYKPPSDSLKSRDYYTDFLVTLAVPSAVALVLFLILAYIMCCRREGVEKRDMQTPDIQLVHHSSIQKSTKELRDMSKNREIAWPLSTLPVFHPVTGEVIPPTHTDNYDSTNMPLMQAQQNLPHQTQIPQPQTTGKWYP.

Topologically, residues 1–317 are extracellular; sequence MLLFWWWELG…LKSRDYYTDF (317 aa). Asn-200 carries N-linked (GlcNAc...) asparagine glycosylation. Residues 318–338 traverse the membrane as a helical segment; that stretch reads LVTLAVPSAVALVLFLILAYI. The Cytoplasmic portion of the chain corresponds to 339–437; sequence MCCRREGVEK…QPQTTGKWYP (99 aa).

The protein belongs to the sarcoglycan alpha/epsilon family. N-glycosylated. In terms of processing, ubiquitinated, leading to its degradation by the proteasome. Identified in all tissues tested. Expression highest in lung and placenta, moderate in brain, heart and skeletal muscle, low in kidney and liver. Also detected in embryo.

It localises to the cell membrane. It is found in the sarcolemma. The protein localises to the golgi apparatus. Its subcellular location is the cell projection. The protein resides in the dendrite. It localises to the cytoplasm. It is found in the cytoskeleton. Functionally, component of the sarcoglycan complex, a subcomplex of the dystrophin-glycoprotein complex which forms a link between the F-actin cytoskeleton and the extracellular matrix. This chain is Epsilon-sarcoglycan (Sgce), found in Mus musculus (Mouse).